A 629-amino-acid chain; its full sequence is Probable potassium transport system protein Kup 3 (629 aa).

12 helical membrane passes run 20–40, 54–74, 106–126, 143–163, 171–191, 212–232, 253–273, 291–311, 343–363, 372–392, 400–420, and 425–445; these read LSLS…LYTF, VTTI…IASV, PFII…GTIT, PSLK…LFAI, IGKA…ILGA, FLFS…LCAT, WFGL…ALVL, FLLP…QAII, IYIG…IIGF, AYGI…FIAL, IITS…FFAA, and FING…MMYI.

This sequence belongs to the HAK/KUP transporter (TC 2.A.72) family.

Its subcellular location is the cell inner membrane. The enzyme catalyses K(+)(in) + H(+)(in) = K(+)(out) + H(+)(out). Its function is as follows. Transport of potassium into the cell. Likely operates as a K(+):H(+) symporter. The protein is Probable potassium transport system protein Kup 3 of Legionella pneumophila (strain Paris).